The following is a 223-amino-acid chain: Phosphoribosylformylglycinamidine synthase subunit PurQ (223 aa).

The 221-residue stretch at 3-223 folds into the Glutamine amidotransferase type-1 domain; that stretch reads SAVILLPGLN…LFAGALGITA (221 aa). Cys-87 serves as the catalytic Nucleophile. Residues His-197 and Glu-199 contribute to the active site.

Part of the FGAM synthase complex composed of 1 PurL, 1 PurQ and 2 PurS subunits.

The protein localises to the cytoplasm. The catalysed reaction is N(2)-formyl-N(1)-(5-phospho-beta-D-ribosyl)glycinamide + L-glutamine + ATP + H2O = 2-formamido-N(1)-(5-O-phospho-beta-D-ribosyl)acetamidine + L-glutamate + ADP + phosphate + H(+). It carries out the reaction L-glutamine + H2O = L-glutamate + NH4(+). The protein operates within purine metabolism; IMP biosynthesis via de novo pathway; 5-amino-1-(5-phospho-D-ribosyl)imidazole from N(2)-formyl-N(1)-(5-phospho-D-ribosyl)glycinamide: step 1/2. Its function is as follows. Part of the phosphoribosylformylglycinamidine synthase complex involved in the purines biosynthetic pathway. Catalyzes the ATP-dependent conversion of formylglycinamide ribonucleotide (FGAR) and glutamine to yield formylglycinamidine ribonucleotide (FGAM) and glutamate. The FGAM synthase complex is composed of three subunits. PurQ produces an ammonia molecule by converting glutamine to glutamate. PurL transfers the ammonia molecule to FGAR to form FGAM in an ATP-dependent manner. PurS interacts with PurQ and PurL and is thought to assist in the transfer of the ammonia molecule from PurQ to PurL. This Brucella abortus biovar 1 (strain 9-941) protein is Phosphoribosylformylglycinamidine synthase subunit PurQ.